A 622-amino-acid polypeptide reads, in one-letter code: 1,4-alpha-glucan branching enzyme GlgB (622 aa).

Aspartate 300 (nucleophile) is an active-site residue. Glutamate 351 serves as the catalytic Proton donor.

It belongs to the glycosyl hydrolase 13 family. GlgB subfamily. As to quaternary structure, monomer.

The enzyme catalyses Transfers a segment of a (1-&gt;4)-alpha-D-glucan chain to a primary hydroxy group in a similar glucan chain.. It participates in glycan biosynthesis; glycogen biosynthesis. Functionally, catalyzes the formation of the alpha-1,6-glucosidic linkages in glycogen by scission of a 1,4-alpha-linked oligosaccharide from growing alpha-1,4-glucan chains and the subsequent attachment of the oligosaccharide to the alpha-1,6 position. The sequence is that of 1,4-alpha-glucan branching enzyme GlgB from Streptococcus agalactiae serotype III (strain NEM316).